The primary structure comprises 166 residues: Large ribosomal subunit protein uL10 (166 aa).

Belongs to the universal ribosomal protein uL10 family. In terms of assembly, part of the ribosomal stalk of the 50S ribosomal subunit. The N-terminus interacts with L11 and the large rRNA to form the base of the stalk. The C-terminus forms an elongated spine to which L12 dimers bind in a sequential fashion forming a multimeric L10(L12)X complex.

Its function is as follows. Forms part of the ribosomal stalk, playing a central role in the interaction of the ribosome with GTP-bound translation factors. The chain is Large ribosomal subunit protein uL10 from Aeromonas salmonicida (strain A449).